Here is a 91-residue protein sequence, read N- to C-terminus: Large ribosomal subunit protein bL27 (91 aa).

This sequence belongs to the bacterial ribosomal protein bL27 family.

This is Large ribosomal subunit protein bL27 from Deinococcus deserti (strain DSM 17065 / CIP 109153 / LMG 22923 / VCD115).